Reading from the N-terminus, the 288-residue chain is Polyamine aminopropyltransferase (288 aa).

The PABS domain maps to 9–238; sequence ETLHDQFGQY…GIMTFAWATD (230 aa). Glutamine 33 serves as a coordination point for S-methyl-5'-thioadenosine. Spermidine-binding residues include histidine 64 and aspartate 88. S-methyl-5'-thioadenosine is bound by residues glutamate 108 and 140 to 141; that span reads DG. The Proton acceptor role is filled by aspartate 158. 158 to 161 provides a ligand contact to spermidine; the sequence is DCTD. S-methyl-5'-thioadenosine is bound at residue proline 165.

Belongs to the spermidine/spermine synthase family. Homodimer or homotetramer.

The protein localises to the cytoplasm. It carries out the reaction S-adenosyl 3-(methylsulfanyl)propylamine + putrescine = S-methyl-5'-thioadenosine + spermidine + H(+). It participates in amine and polyamine biosynthesis; spermidine biosynthesis; spermidine from putrescine: step 1/1. Functionally, catalyzes the irreversible transfer of a propylamine group from the amino donor S-adenosylmethioninamine (decarboxy-AdoMet) to putrescine (1,4-diaminobutane) to yield spermidine. The sequence is that of Polyamine aminopropyltransferase from Escherichia coli (strain UTI89 / UPEC).